We begin with the raw amino-acid sequence, 31 residues long: Cytochrome b6-f complex subunit 6 (31 aa).

The helical transmembrane segment at 3–23 (ILISYFCFLLIFFLFTLILFF) threads the bilayer.

Belongs to the PetL family. As to quaternary structure, the 4 large subunits of the cytochrome b6-f complex are cytochrome b6, subunit IV (17 kDa polypeptide, PetD), cytochrome f and the Rieske protein, while the 4 small subunits are PetG, PetL, PetM and PetN. The complex functions as a dimer.

It is found in the plastid. The protein resides in the chloroplast thylakoid membrane. In terms of biological role, component of the cytochrome b6-f complex, which mediates electron transfer between photosystem II (PSII) and photosystem I (PSI), cyclic electron flow around PSI, and state transitions. PetL is important for photoautotrophic growth as well as for electron transfer efficiency and stability of the cytochrome b6-f complex. This Gnetum parvifolium (Small-leaved jointfir) protein is Cytochrome b6-f complex subunit 6.